An 897-amino-acid polypeptide reads, in one-letter code: Pre-mRNA-splicing factor CWC22 homolog (897 aa).

Polar residues predominate over residues 1 to 10 (MSSSRSQSPE). The segment at 1–155 (MSSSRSQSPE…EKKKKEPLDI (155 aa)) is disordered. Composition is skewed to basic and acidic residues over residues 36–54 (SSEKSASRSQSPRESREVS), 93–107 (RSKETRESESPEKSP), and 131–155 (RSSERKQSEEPAPLPEKKKKEPLDI). One can recognise an MIF4G domain in the interval 194-382 (KKKIHGLVNR…ETAMQIRKDK (189 aa)). Residues 444 to 472 (NADISDEDGGDELDDEEEGSDVEEAPKKT) are disordered. Positions 447–466 (ISDEDGGDELDDEEEGSDVE) are enriched in acidic residues. Residues 485–601 (AFRREVYLTM…DWKILADMKM (117 aa)) form the MI domain. Composition is skewed to low complexity over residues 689-710 (LDQLKAESSSDSSSSSDSSDSS) and 720-730 (DSSSDSSSSSE). The tract at residues 689–897 (LDQLKAESSS…VESDDRRRRR (209 aa)) is disordered. The span at 743 to 897 (NSEESSKKKE…VESDDRRRRR (155 aa)) shows a compositional bias: basic and acidic residues.

The protein belongs to the CWC22 family. As to expression, expressed in germ cells, oocytes, and sperm cells.

Its subcellular location is the nucleus. It is found in the nucleus speckle. Functionally, required for pre-mRNA splicing and for exon-junction complex (EJC) assembly. Hinders EIF4A3 from non-specifically binding RNA and escorts it to the splicing machinery to promote EJC assembly on mature mRNAs. Through its role in EJC assembly, required for nonsense-mediated mRNA decay. Plays a role in the nuclear retention of unspliced mRNAs. Plays a role in sex determination. Required for early embryogenesis and tissue differentiation. This Caenorhabditis elegans protein is Pre-mRNA-splicing factor CWC22 homolog.